Consider the following 226-residue polypeptide: PKHD-type hydroxylase mma_3620 (226 aa).

The Fe2OG dioxygenase domain maps to 78–178 (RYMPPLFNRY…RVCSFFWLQS (101 aa)). Residues His-96, Asp-98, and His-159 each coordinate Fe cation. Residue Arg-169 participates in 2-oxoglutarate binding.

Fe(2+) is required as a cofactor. Requires L-ascorbate as cofactor.

The sequence is that of PKHD-type hydroxylase mma_3620 from Janthinobacterium sp. (strain Marseille) (Minibacterium massiliensis).